We begin with the raw amino-acid sequence, 173 residues long: Disulfide bond formation protein B (173 aa).

Residues 1–11 (MNALQWSFRAQ) lie on the Cytoplasmic side of the membrane. The chain crosses the membrane as a helical span at residues 12 to 28 (CLTGFLFCTGLLAYAIF). At 29 to 46 (LQLHQGLEPCPLCIFQRI) the chain is on the periplasmic side. A disulfide bond links C38 and C41. A helical transmembrane segment spans residues 47 to 63 (AFAVLGILFLIAGLYNS). Topologically, residues 64-70 (SNVYTRK) are cytoplasmic. A helical membrane pass occupies residues 71–88 (AYGLLIFLTAIIGTGIAG). The Periplasmic segment spans residues 89–145 (RHVWVQLMPHNTISSCGSPLSFLSETMGPFEVFRTVLTGTSNCGNIDWRFLGLSMPM). Cysteines 104 and 131 form a disulfide. The chain crosses the membrane as a helical span at residues 146–164 (WSMFWFVALALLGLLVGFK). Residues 165-173 (AERRKPLFS) are Cytoplasmic-facing.

It belongs to the DsbB family.

The protein localises to the cell inner membrane. Functionally, required for disulfide bond formation in some periplasmic proteins. Acts by oxidizing the DsbA protein. In Xylella fastidiosa (strain Temecula1 / ATCC 700964), this protein is Disulfide bond formation protein B.